An 84-amino-acid chain; its full sequence is Small ribosomal subunit protein eS27-like (84 aa).

The segment covering 1–16 (MPLARDLLHPSLEEEK) has biased composition (basic and acidic residues). The segment at 1–23 (MPLARDLLHPSLEEEKKKHKKKR) is disordered. The C4-type zinc-finger motif lies at 38–60 (PGCYKITTVFSHAQTVVLCVGCS).

This sequence belongs to the eukaryotic ribosomal protein eS27 family. Zn(2+) is required as a cofactor.

The polypeptide is Small ribosomal subunit protein eS27-like (Mus musculus (Mouse)).